Consider the following 277-residue polypeptide: Alternative cytochrome c oxidase subunit 2 (277 aa).

Over Met-1–Asn-40 the chain is Periplasmic. A helical membrane pass occupies residues Ile-41–Val-61. At Phe-62–Trp-83 the chain is on the cytoplasmic side. The chain crosses the membrane as a helical span at residues Trp-84–Trp-104. Residues His-105–Asp-277 lie on the Periplasmic side of the membrane. Cu cation is bound by residues His-190, Cys-225, Cys-229, and His-233.

This sequence belongs to the cytochrome c oxidase subunit 2 family.

It localises to the cell membrane. It carries out the reaction 4 Fe(II)-[cytochrome c] + O2 + 8 H(+)(in) = 4 Fe(III)-[cytochrome c] + 2 H2O + 4 H(+)(out). Cytochrome c oxidase is the component of the respiratory chain that catalyzes the reduction of oxygen to water. Subunits 1-3 form the functional core of the enzyme complex. Subunit 2 transfers the electrons from cytochrome c via its binuclear copper A center to the bimetallic center of the catalytic subunit 1. In Bradyrhizobium diazoefficiens (strain JCM 10833 / BCRC 13528 / IAM 13628 / NBRC 14792 / USDA 110), this protein is Alternative cytochrome c oxidase subunit 2 (coxM).